Here is a 236-residue protein sequence, read N- to C-terminus: Purine nucleoside phosphorylase (236 aa).

A purine D-ribonucleoside is bound at residue H5. Phosphate contacts are provided by residues G21, R25, R43, and 86–89 (RYGT). A purine D-ribonucleoside contacts are provided by residues E163, 180-182 (EME), and 204-205 (SD).

This sequence belongs to the PNP/UDP phosphorylase family. As to quaternary structure, homohexamer; disulfide-linked. Trimer of homodimers, with three symmetric intersubunit disulfide bonds linking the dimers to one another.

It carries out the reaction S-methyl-5'-thioadenosine + phosphate = 5-(methylsulfanyl)-alpha-D-ribose 1-phosphate + adenine. The enzyme catalyses a purine D-ribonucleoside + phosphate = a purine nucleobase + alpha-D-ribose 1-phosphate. The catalysed reaction is a purine 2'-deoxy-D-ribonucleoside + phosphate = a purine nucleobase + 2-deoxy-alpha-D-ribose 1-phosphate. It functions in the pathway purine metabolism; purine nucleoside salvage. In terms of biological role, cleavage of guanosine or inosine to respective bases and sugar-1-phosphate molecules. Cleaves inosine, guanosine, and adenosine with a better efficiency than MTA. The protein is Purine nucleoside phosphorylase of Saccharolobus solfataricus (strain ATCC 35092 / DSM 1617 / JCM 11322 / P2) (Sulfolobus solfataricus).